The chain runs to 283 residues: 4-diphosphocytidyl-2-C-methyl-D-erythritol kinase (283 aa).

Residue Lys10 is part of the active site. Residue 99–109 (PMGGGLGGGSS) coordinates ATP. The active site involves Asp141.

It belongs to the GHMP kinase family. IspE subfamily. Homodimer.

It carries out the reaction 4-CDP-2-C-methyl-D-erythritol + ATP = 4-CDP-2-C-methyl-D-erythritol 2-phosphate + ADP + H(+). It functions in the pathway isoprenoid biosynthesis; isopentenyl diphosphate biosynthesis via DXP pathway; isopentenyl diphosphate from 1-deoxy-D-xylulose 5-phosphate: step 3/6. Functionally, catalyzes the phosphorylation of the position 2 hydroxy group of 4-diphosphocytidyl-2C-methyl-D-erythritol. In Salmonella arizonae (strain ATCC BAA-731 / CDC346-86 / RSK2980), this protein is 4-diphosphocytidyl-2-C-methyl-D-erythritol kinase.